Reading from the N-terminus, the 662-residue chain is ABC transporter G family member 25 (662 aa).

The interval 1 to 30 (MSAFDGVENQMNGPDSSPRLSQDPREPRSL) is disordered. Positions 9 to 20 (NQMNGPDSSPRL) are enriched in polar residues. A glycan (N-linked (GlcNAc...) asparagine) is linked at asparagine 56. The region spanning 69–308 (QKPSDETRST…FESVGFSPAF (240 aa)) is the ABC transporter domain. 101–108 (GPSGSGKS) lines the ATP pocket. An N-linked (GlcNAc...) asparagine glycan is attached at asparagine 122. The next 7 membrane-spanning stretches (helical) occupy residues 374–394 (VNGGGITTCIATWFSQLCILL), 406–426 (FDLLRIFQVVAASILCGLMWW), 437–457 (LGLLFFISIFWGVLPSFNAVF), 489–509 (LSMELVLPASFLTFTYWMVYL), 522–542 (VLLLYVLASQGLGLALGAAIM), 547–567 (ASTIVTVTMLAFVLTGGYYVN), and 629–649 (VIGDVGMWTSVGVLFLMFFGY). The ABC transmembrane type-2 domain occupies 388–594 (SQLCILLHRL…CYRLLVAIQY (207 aa)).

The protein belongs to the ABC transporter superfamily. ABCG family. Eye pigment precursor importer (TC 3.A.1.204) subfamily. As to expression, mainly expressed in vascular tissues,predominantly in phloem companion cells, with highest levels in roots and seeds, and lower levels in seedlings, stems, leaves and flowers. Mostly observed in inflorescence meristems relative to cauline leaves and developing siliques. In seeds, mainly expressed in the endosperm and, to a lesser extent, in the embryo.

The protein localises to the cell membrane. It carries out the reaction abscisate(in) + ATP + H2O = abscisate(out) + ADP + phosphate + H(+). Its activity is regulated as follows. ADP and vanadate (ABC transporters inhibitor) inhibit the ATP-dependent abscisic acid (ABA) uptake. Its function is as follows. High affinity abscisic acid (ABA) transporter that mediates the export of ABA, with a preference for (+)-ABA, through the plasma membrane, especially in vascular tissues (e.g. phloem companion cells), and is involved in the intercellular ABA signaling pathway. Together with ABCG31, export ABA from the endosperm to deliver it to the embryo via ABCG30 and ABCG40-mediated import to suppress radicle extension and subsequent embryonic growth. The polypeptide is ABC transporter G family member 25 (Arabidopsis thaliana (Mouse-ear cress)).